Consider the following 1084-residue polypeptide: MKVIKKRFFKPKEETLPSDEVPDPQSSAEPLHSLFVPDESEEEETTTSPKTNFEKDIIAIVGDISPIIMKYLYAKYSQKRNGAKFAVTELLTNPPDVEKLQQDSIASQSAKRPHTIVSYQEPPNKKVNINPDSASSNNEPLMWQRLIGSLNIQAMATXPDHETVEIPGKXKLKRITTKNSTMANSAIVRVYHNEREIGRIPEDWTRILSPLFDLNIAVFEASVLEETKSRLSTGDSFVIEIEVYLTNSSFAKNLDATENPIDLKKSNFDYSKESESEAALRLRQFAISNLFDRLAIKPLKVNDDTEDEEDISSQEINSGDVEHPVPEINLDQMKEFYQSNNQLKILEGLPETTTPPKENFALDLRSYQKHGLSWMLAREKELDVLEMLSNEDKLSSQSRKELENLGTMNPLWRKYKWPYATEATQDPTQNQTEKYFYANMYNGELSLEKPVIKSSLRGGILADEMGLGKTIATLALVNSVPYDNFPEPKSDRPYASQTTLIVVPMSLLFQWKSEFEKCNNNSRHVCRLHYGEDQETNLAWSLCNPDNSKIPIVMITTYGTVLNEFTRLSKRRNSKGELPKVGLYSVKFFRIILDEGHNIRNRNTKTAKSVYELQSSRKWILTGTPIVNRLDDLYSLTKFLELDPWNNFSYWKTFVTLPFEQKKISQTLDVVKSILEPIFLRRTKSQKKNGKPLVELPAKEVVIEQIKFNDDEEKLYQWFKDRAYASFAEGIKSGQLLRRYTQILTHILRLRQVCCHVDLIGGAHEMDDEIIEAEQDEDMRKFLTSIKENQIRFANDTDVKEKMYNLYGKIKEENECSICTQVPIPYSEMVVTPCAHTFCLSCILEHLDFQKELKKEKLCPNCRSPISKYQLFRIRNQPTKGNEIRFHIQKDAPDYSFQLYLYDPNRSSSKIQALVRHLKALHSQSPNSKVIVFSQFSSYLDIIQSELKLASEEFIVFKFDGRLNMNDRTKLLESFNQPLEDGKVAILLLSLKAGGVGLNLTTASRAYMMDPWWSPSIEDQAIDRIHRIGQNETVKVVRFIMENSIETKMLKIQERKKQIGEAVAAEEEERRKRRIEEIQILFEE.

The disordered stretch occupies residues 11 to 51; sequence PKEETLPSDEVPDPQSSAEPLHSLFVPDESEEEETTTSPKT. The region spanning 450–643 is the Helicase ATP-binding domain; sequence PVIKSSLRGG…YSLTKFLELD (194 aa). An ATP-binding site is contributed by 463–470; the sequence is DEMGLGKT. A DEGH box motif is present at residues 594-597; sequence DEGH. The segment at 816 to 863 adopts an RING-type zinc-finger fold; that stretch reads CSICTQVPIPYSEMVVTPCAHTFCLSCILEHLDFQKELKKEKLCPNCR. Residues 913-1071 enclose the Helicase C-terminal domain; sequence ALVRHLKALH…AVAAEEEERR (159 aa).

It belongs to the SNF2/RAD54 helicase family.

It localises to the cytoplasm. The protein resides in the nucleus. Its function is as follows. Probable helicase, member of the UBC2/RAD6 epistasis group. Functions with DNA repair protein RAD18 in error-free postreplication DNA repair. Involved in the maintenance of wild-type rates of instability of simple repetitive sequences such as poly(GT) repeats. Seems to be involved in maintaining a balance which acts in favor of error-prone non-homologous joining during DNA double-strand breaks repairs. The chain is DNA repair protein RAD5 (RAD5) from Candida albicans (strain SC5314 / ATCC MYA-2876) (Yeast).